Consider the following 1325-residue polypeptide: Protein PHYTOCHROME-DEPENDENT LATE-FLOWERING (1325 aa).

Polar residues-rich tracts occupy residues 313 to 331 (IGST…SVSG) and 504 to 515 (NFPQTSWNVNPG). Disordered regions lie at residues 313-371 (IGST…MPGL), 462-558 (EPFE…EFSG), 593-616 (ANEA…NSLP), 852-875 (VAGQ…NSTQ), and 1160-1325 (QQQQ…GNNS). Positions 518–529 (IEKEPKKEEQFS) are enriched in basic and acidic residues. Residues 596–607 (AMQQRQHQAQMA) are compositionally biased toward low complexity. A compositionally biased stretch (polar residues) spans 863-875 (HGNTGNTPNNSTQ). Residues 1160–1224 (QQQQQQQLQQ…QQQATASPLQ (65 aa)) are compositionally biased toward low complexity. Positions 1225-1239 (SVLSPPQVGSPSAGI) are enriched in polar residues. Residues 1240–1262 (TQQQLQQSSPQQMSQRTPMSPQQ) are compositionally biased toward low complexity. Composition is skewed to polar residues over residues 1263–1286 (VNQR…TSNL) and 1293–1325 (PQLS…GNNS).

In terms of assembly, component of a red light-dependent nuclear complex made of PHL, PHYB and CO. Interacts directly with PHYB and CO; CO binding requires the presence of PHYB. Mostly expressed in cotyledons and leaves, both in mesophyll and vasculature cells. Also present in roots, hypocotyls and shoot apices.

The protein localises to the nucleus. Its subcellular location is the nuclear body. It localises to the cytoplasmic granule. It is found in the cytoplasm. Functionally, triggers photoperiod-monitored flowering by repressing PHYB-dependent flowering negative regulation, probably through physical interactions with PHYB and CO. The chain is Protein PHYTOCHROME-DEPENDENT LATE-FLOWERING from Arabidopsis thaliana (Mouse-ear cress).